Here is a 1105-residue protein sequence, read N- to C-terminus: Ran-binding protein 6 (1105 aa).

Ala2 carries the N-acetylalanine modification. 7 HEAT repeats span residues 219–257 (FKDFADLLPGILQAVNDSCYQDDDSVLESLVEIADTVPK), 361–399 (KVVLPMTKEHIMQMLQSPDWKCRHAGLMALSAIGEGCHQ), 402–440 (EPILDETVNSVLLFLQDPHPRVRAAACTTLGQMATDFAP), 444–483 (KKFHEIVITALLRTMENQGNQRVQSHAASALVIFIEDCPK), 866–905 (LPWFEQLLPLIVNLICSSRPWPDRQWGLCIFDDIIEHCSP), 908–946 (FKYVEYFRWPMLLNMRDNNPEVRQAAAYGLGVMAQFGGD), and 949–987 (RSLCSEAVPLLVKVIKCANSKTKKNVIATENCISAIGKI).

This sequence belongs to the importin beta family.

The protein localises to the cytoplasm. The protein resides in the nucleus. Functionally, may function in nuclear protein import as nuclear transport receptor. The chain is Ran-binding protein 6 (Ranbp6) from Mus musculus (Mouse).